The sequence spans 552 residues: Ribulokinase (552 aa).

Belongs to the ribulokinase family.

The enzyme catalyses D-ribulose + ATP = D-ribulose 5-phosphate + ADP + H(+). It catalyses the reaction L-ribulose + ATP = L-ribulose 5-phosphate + ADP + H(+). It functions in the pathway carbohydrate degradation; L-arabinose degradation via L-ribulose; D-xylulose 5-phosphate from L-arabinose (bacterial route): step 2/3. This Bacillus licheniformis (strain ATCC 14580 / DSM 13 / JCM 2505 / CCUG 7422 / NBRC 12200 / NCIMB 9375 / NCTC 10341 / NRRL NRS-1264 / Gibson 46) protein is Ribulokinase.